The chain runs to 409 residues: Testis-expressed protein 13A (409 aa).

The required for repression of transcription stretch occupies residues 92 to 408 (WLHGFAKLHK…CGKGIWLQKP (317 aa)). Residues 347–374 (GGPHRIDHQEHPRDRRYSEPHQQRPPVY) are disordered. Positions 348-368 (GPHRIDHQEHPRDRRYSEPHQ) are enriched in basic and acidic residues. Residues 376–400 (RPGDWDCPWCNAVNFSRRDTCFDCG) form a RanBP2-type zinc finger. Residues Cys382, Cys385, Cys396, and Cys399 each coordinate Zn(2+).

The protein belongs to the TEX13 family. As to quaternary structure, interacts with CNOT1; the interaction may inhibit CNOT1 binding to mRNA and subsequently CNOT1-mediated mRNA degradation. As to expression, testis specific.

Binds to ssRNA containing the consensus sequence 5'-AGGUAA-3'. Plays a role in transcriptional repression. Required for rapid sperm motility and timely degradation of mRNA via its interaction with CNOT1. This chain is Testis-expressed protein 13A, found in Homo sapiens (Human).